The sequence spans 77 residues: U8-lycotoxin-Ls1t (77 aa).

The first 20 residues, 1–20 (MKLIIFTGLVLFAIVSLIEA), serve as a signal peptide directing secretion. A propeptide spanning residues 21–26 (QAENEK) is cleaved from the precursor.

It belongs to the neurotoxin 19 (CSTX) family. 08 (U8-Lctx) subfamily. In terms of processing, contains 4 disulfide bonds. In terms of tissue distribution, expressed by the venom gland.

The protein localises to the secreted. The polypeptide is U8-lycotoxin-Ls1t (Lycosa singoriensis (Wolf spider)).